The sequence spans 960 residues: Endoplasmic reticulum aminopeptidase 2 (960 aa).

Over 1-20 (MFHSSAMVNSHRKPMFNIHR) the chain is Cytoplasmic. A helical; Signal-anchor for type II membrane protein membrane pass occupies residues 21–40 (GFYCLTAILPQICICSQFSV). Residues 41-960 (PSSYHFTEDP…TLRTWLMVNT (920 aa)) lie on the Lumenal side of the membrane. Residues Asn85 and Asn119 are each glycosylated (N-linked (GlcNAc...) asparagine). Glu200 contacts substrate. An N-linked (GlcNAc...) asparagine glycan is attached at Asn219. 334–338 (GAMEN) is a binding site for substrate. His370 contributes to the Zn(2+) binding site. Glu371 serves as the catalytic Proton acceptor. His374 and Glu393 together coordinate Zn(2+). Residue Asn405 is glycosylated (N-linked (GlcNAc...) asparagine). Cysteines 421 and 460 form a disulfide. The N-linked (GlcNAc...) asparagine glycan is linked to Asn650. Cys759 and Cys766 are disulfide-bonded.

The protein belongs to the peptidase M1 family. Heterodimer with ERAP1. Zn(2+) is required as a cofactor. Post-translationally, N-glycosylated. As to expression, ubiquitously expressed. Highly expressed in spleen and leukocytes.

The protein localises to the endoplasmic reticulum membrane. In terms of biological role, aminopeptidase that plays a central role in peptide trimming, a step required for the generation of most HLA class I-binding peptides. Peptide trimming is essential to customize longer precursor peptides to fit them to the correct length required for presentation on MHC class I molecules. Preferentially hydrolyzes the basic residues Arg and Lys. This Homo sapiens (Human) protein is Endoplasmic reticulum aminopeptidase 2 (ERAP2).